A 442-amino-acid polypeptide reads, in one-letter code: Histidine--tRNA ligase (442 aa).

It belongs to the class-II aminoacyl-tRNA synthetase family. Homodimer.

It localises to the cytoplasm. The enzyme catalyses tRNA(His) + L-histidine + ATP = L-histidyl-tRNA(His) + AMP + diphosphate + H(+). This chain is Histidine--tRNA ligase (hisS), found in Helicobacter pylori (strain ATCC 700392 / 26695) (Campylobacter pylori).